Reading from the N-terminus, the 327-residue chain is Undecaprenyl-phosphate 4-deoxy-4-formamido-L-arabinose transferase (327 aa).

2 helical membrane-spanning segments follow: residues 233–253 (ILSLIGSVVALSGFLLALLLI) and 268–288 (VFTLFAVLFMFIGAQFVGMGL).

Belongs to the glycosyltransferase 2 family.

Its subcellular location is the cell inner membrane. It catalyses the reaction UDP-4-deoxy-4-formamido-beta-L-arabinose + di-trans,octa-cis-undecaprenyl phosphate = 4-deoxy-4-formamido-alpha-L-arabinopyranosyl di-trans,octa-cis-undecaprenyl phosphate + UDP. It functions in the pathway glycolipid biosynthesis; 4-amino-4-deoxy-alpha-L-arabinose undecaprenyl phosphate biosynthesis; 4-amino-4-deoxy-alpha-L-arabinose undecaprenyl phosphate from UDP-4-deoxy-4-formamido-beta-L-arabinose and undecaprenyl phosphate: step 1/2. It participates in bacterial outer membrane biogenesis; lipopolysaccharide biosynthesis. Catalyzes the transfer of 4-deoxy-4-formamido-L-arabinose from UDP to undecaprenyl phosphate. The modified arabinose is attached to lipid A and is required for resistance to polymyxin and cationic antimicrobial peptides. This chain is Undecaprenyl-phosphate 4-deoxy-4-formamido-L-arabinose transferase, found in Pectobacterium carotovorum subsp. carotovorum (strain PC1).